A 436-amino-acid polypeptide reads, in one-letter code: Trigger factor (436 aa).

The PPIase FKBP-type domain maps to 161-246 (DLRVNMDFVG…LNKVEKQDLP (86 aa)).

Belongs to the FKBP-type PPIase family. Tig subfamily.

It localises to the cytoplasm. It carries out the reaction [protein]-peptidylproline (omega=180) = [protein]-peptidylproline (omega=0). Functionally, involved in protein export. Acts as a chaperone by maintaining the newly synthesized protein in an open conformation. Functions as a peptidyl-prolyl cis-trans isomerase. The chain is Trigger factor from Tolumonas auensis (strain DSM 9187 / NBRC 110442 / TA 4).